Reading from the N-terminus, the 776-residue chain is Venom dipeptidyl peptidase 4 (776 aa).

An N-terminal signal peptide occupies residues 1–19; sequence MVPLRSFVLLNGLFFVLLA. N-linked (GlcNAc...) asparagine glycosylation is found at Asn-44, Asn-66, and Asn-329. Disulfide bonds link Cys-449/Cys-452 and Cys-462/Cys-480. N-linked (GlcNAc...) asparagine glycosylation is found at Asn-504 and Asn-577. The Charge relay system role is filled by Ser-638. Residues Cys-658 and Cys-769 are joined by a disulfide bond. N-linked (GlcNAc...) asparagine glycosylation is present at Asn-693. Catalysis depends on charge relay system residues Asp-717 and His-749.

The protein belongs to the peptidase S9B family. DPPIV subfamily. Expressed by the venom gland.

The protein resides in the secreted. The catalysed reaction is Release of an N-terminal dipeptide, Xaa-Yaa-|-Zaa-, from a polypeptide, preferentially when Yaa is Pro, provided Zaa is neither Pro nor hydroxyproline.. Functionally, venom dipeptidyl-peptidase which removes N-terminal dipeptides sequentially from polypeptides having unsubstituted N-termini provided that the penultimate residue is proline. May process venom proteins into their active forms and/or modulate the chemotactic activity of immune cells after the insect sting. The protein is Venom dipeptidyl peptidase 4 of Vespa velutina (Asian yellow-legged hornet).